A 148-amino-acid polypeptide reads, in one-letter code: Aspartate carbamoyltransferase regulatory chain (148 aa).

Zn(2+) is bound by residues Cys-106, Cys-111, Cys-134, and Cys-137.

The protein belongs to the PyrI family. As to quaternary structure, contains catalytic and regulatory chains. Zn(2+) is required as a cofactor.

Its function is as follows. Involved in allosteric regulation of aspartate carbamoyltransferase. The chain is Aspartate carbamoyltransferase regulatory chain from Methanococcus maripaludis (strain C5 / ATCC BAA-1333).